We begin with the raw amino-acid sequence, 294 residues long: Glyceraldehyde-3-phosphate dehydrogenase (294 aa).

NAD(+) contacts are provided by Asp-19, Arg-63, and Thr-105. D-glyceraldehyde 3-phosphate contacts are provided by residues 134 to 136 (SCT), Thr-165, 194 to 195 (TG), and Arg-217. Cys-135 acts as the Nucleophile in catalysis.

The protein belongs to the glyceraldehyde-3-phosphate dehydrogenase family. In terms of assembly, homotetramer.

It is found in the cytoplasm. The catalysed reaction is D-glyceraldehyde 3-phosphate + phosphate + NAD(+) = (2R)-3-phospho-glyceroyl phosphate + NADH + H(+). It functions in the pathway carbohydrate degradation; glycolysis; pyruvate from D-glyceraldehyde 3-phosphate: step 1/5. Functionally, catalyzes the oxidative phosphorylation of glyceraldehyde 3-phosphate (G3P) to 1,3-bisphosphoglycerate (BPG) using the cofactor NAD. The first reaction step involves the formation of a hemiacetal intermediate between G3P and a cysteine residue, and this hemiacetal intermediate is then oxidized to a thioester, with concomitant reduction of NAD to NADH. The reduced NADH is then exchanged with the second NAD, and the thioester is attacked by a nucleophilic inorganic phosphate to produce BPG. In Shimwellia blattae (Escherichia blattae), this protein is Glyceraldehyde-3-phosphate dehydrogenase (gap).